The primary structure comprises 599 residues: 1-deoxy-D-xylulose-5-phosphate synthase (599 aa).

Residues H63 and G104 to S106 each bind thiamine diphosphate. Residue D135 coordinates Mg(2+). Thiamine diphosphate contacts are provided by residues G136 to A137, N164, Y271, and E352. N164 contributes to the Mg(2+) binding site.

Belongs to the transketolase family. DXPS subfamily. In terms of assembly, homodimer. Mg(2+) serves as cofactor. The cofactor is thiamine diphosphate.

It carries out the reaction D-glyceraldehyde 3-phosphate + pyruvate + H(+) = 1-deoxy-D-xylulose 5-phosphate + CO2. The protein operates within metabolic intermediate biosynthesis; 1-deoxy-D-xylulose 5-phosphate biosynthesis; 1-deoxy-D-xylulose 5-phosphate from D-glyceraldehyde 3-phosphate and pyruvate: step 1/1. In terms of biological role, catalyzes the acyloin condensation reaction between C atoms 2 and 3 of pyruvate and glyceraldehyde 3-phosphate to yield 1-deoxy-D-xylulose-5-phosphate (DXP). This is 1-deoxy-D-xylulose-5-phosphate synthase from Nitratiruptor sp. (strain SB155-2).